The sequence spans 183 residues: Putative manganese efflux pump MntP 1 (183 aa).

6 helical membrane passes run 6-26 (LFLL…CIGI), 36-56 (MIFV…GGYI), 64-84 (IVPI…ILMI), 100-120 (IMYL…GFTT), 130-150 (LFMS…LGII), and 158-178 (ISII…LFGL).

This sequence belongs to the MntP (TC 9.B.29) family.

Its subcellular location is the cell membrane. Probably functions as a manganese efflux pump. This is Putative manganese efflux pump MntP 1 from Clostridium botulinum (strain Hall / ATCC 3502 / NCTC 13319 / Type A).